The primary structure comprises 486 residues: MFAAGLAPFYASNFSLWSAAYCSSAGPGGCSFPLDPAAVKKPSFCIADILHAGVGEPGATPEGLAGASAAALTAHLGSAHPHASFQAAARSPLRPTPVVAPSEVPAGFPQRLSPLSAAYHHHHPQQQQQQQQPQQQQPPPPPRAGALQPPASGSRVVPNPHQSGSAPAPSSKDLKFGIDRILSAEFDPKVKEGNTLRDLTSLLTGGRPAGVHLPGLQPSAGQFFASLDPINEASAILSPLSSNPRNSVQHQFQDTFPGPYAVLTKDTMPQTYKRKRSWSRAVFSNLQRKGLEKRFEIQKYVTKPDRKQLAAMLGLTDAQVKVWFQNRRMKWRHSKEAQAQKDKDKEAGEKPSGGAPAPDGEPEERSPSRSEGEAESESSDPESLDMAPSDTERTEGTERSLHQTTVIKASAAGALLAASSGGSGGSGGGGGGGFNFGGLSSGSTTSAGSSGSHSSGGASELLPAPQPSLSSAPKSPEPVPAPLGGL.

Disordered stretches follow at residues 83-173 and 330-486; these read ASFQ…SSKD and KWRH…LGGL. Positions 125 to 135 are enriched in low complexity; it reads QQQQQQQQPQQ. Residues 276-335 constitute a DNA-binding region (homeobox); sequence RSWSRAVFSNLQRKGLEKRFEIQKYVTKPDRKQLAAMLGLTDAQVKVWFQNRRMKWRHSK. Basic and acidic residues-rich tracts occupy residues 334 to 349 and 363 to 372; these read SKEA…EAGE and EERSPSRSEG. Over residues 373-383 the composition is skewed to acidic residues; the sequence is EAESESSDPES. Residues 390–401 show a composition bias toward basic and acidic residues; sequence DTERTEGTERSL. The span at 409–420 shows a compositional bias: low complexity; that stretch reads ASAAGALLAASS. The segment covering 421 to 440 has biased composition (gly residues); it reads GGSGGSGGGGGGGFNFGGLS. Over residues 441 to 474 the composition is skewed to low complexity; sequence SGSTTSAGSSGSHSSGGASELLPAPQPSLSSAPK. Over residues 475-486 the composition is skewed to pro residues; it reads SPEPVPAPLGGL.

The protein belongs to the H2.0 homeobox family.

It localises to the nucleus. Functionally, transcription factor required for TBX21/T-bet-dependent maturation of Th1 cells as well as maintenance of Th1-specific gene expression. Involved in embryogenesis and hematopoiesis. The sequence is that of H2.0-like homeobox protein (HLX) from Bos taurus (Bovine).